Consider the following 235-residue polypeptide: MPRKHLIASQTNKKQQSNAKQLQKLAKRIAAAVKKGGSNIDANPQLKVAVELALAHGLSADSIKRNIHGSEKDPTKLSEFCYEIFGPNGVGIIVFGLTDNPNRLLSSLNGYIAKLKAQLAKPNSVKINFEEKGIALVKHNNFTQDELIELLISNNINLLDLNEDDDSFEVVVDSPSYFALKDLLVKNSFTIEASELRLIPLLTVELNAEQHTLLNRFLNACEEDDDIQTVVHNAL.

The protein belongs to the TACO1 family.

The protein localises to the cytoplasm. The protein is Probable transcriptional regulatory protein MPN_478 of Mycoplasma pneumoniae (strain ATCC 29342 / M129 / Subtype 1) (Mycoplasmoides pneumoniae).